The primary structure comprises 130 residues: Small ribosomal subunit protein uS9 (130 aa).

The protein belongs to the universal ribosomal protein uS9 family.

In Aster yellows witches'-broom phytoplasma (strain AYWB), this protein is Small ribosomal subunit protein uS9.